A 210-amino-acid polypeptide reads, in one-letter code: UPF0301 protein Mnod_6933 (210 aa).

Belongs to the UPF0301 (AlgH) family.

The polypeptide is UPF0301 protein Mnod_6933 (Methylobacterium nodulans (strain LMG 21967 / CNCM I-2342 / ORS 2060)).